A 208-amino-acid polypeptide reads, in one-letter code: Ras-related protein Rab-6A (208 aa).

Residue Ser2 is modified to N-acetylserine. Positions 23, 24, 25, 26, 27, 28, 39, 40, 42, and 45 each coordinate GTP. Residue Thr27 participates in Mg(2+) binding. Residues 32–50 carry the Switch 1 motif; sequence RFMYDSFDNTYQATIGIDF. Thr45 and Asp68 together coordinate Mg(2+). A Switch 2 motif is present at residues 69-88; the sequence is TAGQERFRSLIPSYIRDSAA. Residues Gly71, Asn126, Lys127, Asp129, Ser156, Ala157, and Lys158 each contribute to the GTP site. Residues Cys206 and Cys208 are each lipidated (S-geranylgeranyl cysteine). Cys208 is subject to Cysteine methyl ester.

Belongs to the small GTPase superfamily. Rab family. Requires Mg(2+) as cofactor.

Its subcellular location is the golgi apparatus membrane. It catalyses the reaction GTP + H2O = GDP + phosphate + H(+). Regulated by guanine nucleotide exchange factors (GEFs) which promote the exchange of bound GDP for free GTP. Regulated by GTPase activating proteins (GAPs) which increase the GTP hydrolysis activity. Inhibited by GDP dissociation inhibitors (GDIs). Functionally, the small GTPases Rab are key regulators of intracellular membrane trafficking, from the formation of transport vesicles to their fusion with membranes. Rabs cycle between an inactive GDP-bound form and an active GTP-bound form that is able to recruit to membranes different sets of downstream effectors directly responsible for vesicle formation, movement, tethering and fusion. RAB6A acts as a regulator of COPI-independent retrograde transport from the Golgi apparatus towards the endoplasmic reticulum (ER). The polypeptide is Ras-related protein Rab-6A (RAB6A) (Gallus gallus (Chicken)).